Consider the following 69-residue polypeptide: Amphipathic peptide Hp1404 (69 aa).

Positions Met1 to Gly23 are cleaved as a signal peptide. Phenylalanine amide is present on Phe37. Positions Gly41–Lys69 are excised as a propeptide.

This sequence belongs to the non-disulfide-bridged peptide (NDBP) superfamily. Short antimicrobial peptide (group 4) family. As to expression, expressed by the venom gland.

It localises to the secreted. The protein resides in the target cell membrane. Antibacterial activity is decreased by serum. In terms of biological role, antimicrobial peptide that acts by inducing concentration-dependent membrane disruption, implying a membrane-lytic mode of action. Acts with potent activity against Gram-positive bacteria (MIC=4.04-16.16 uM) including methicillin-resistant S.aureus (MRSA). Its activity on Gram-negative bacteria is controversial. Li and colleagues (2014) describe no activity towards E.coli and P.aeruginosa, while Kim and colleagues (2018) describe a potent activity towards P.aeruginosa (MIC=3.13-12.5 uM), and Luo and colleagues (2021) describe a potent activity against antibiotic-sensitive and -resistant Acinetobacter baumannii strains (MIC=3.2-10 uM). On S.aureus, possibly acts by impairing an unknown intracellular target and/or by interacting with the membrane, leading to the lateral expansion of the membrane area at high MIC concentrations, resulting in the formation of mesosome-like structures that leads to cell lysis. Shows moderate inhibition of P.aeruginosa biofilm formation. Administration of this peptide at sub-MIC concentrations in multiple treatments does not lead to resistance in S.aureus. Exhibits low toxicity and hemolytic activity against mammalian cell lines and BALB/c mice. In vivo, improves the survival rate of the MRSA infected BALB/c mice in the peritonitis model. In Heterometrus petersii (Asian forest scorpion), this protein is Amphipathic peptide Hp1404.